The sequence spans 247 residues: PsbP domain-containing protein 3, chloroplastic (247 aa).

The transit peptide at 1–26 (MAAISPWLSSPQSFSNPRVTITDSRR) directs the protein to the chloroplast. Residues 27 to 80 (CSSISAAISVLDSSNEEQHRISSRDHVGMKRRDVMLQIASSVFFLPLAISPAFA) constitute a thylakoid transit peptide.

This sequence belongs to the PsbP family.

It localises to the plastid. It is found in the chloroplast thylakoid lumen. The chain is PsbP domain-containing protein 3, chloroplastic (PPD3) from Arabidopsis thaliana (Mouse-ear cress).